The following is a 342-amino-acid chain: Succinylglutamate desuccinylase (342 aa).

3 residues coordinate Zn(2+): histidine 63, glutamate 66, and histidine 159. The active site involves glutamate 222.

This sequence belongs to the AspA/AstE family. Succinylglutamate desuccinylase subfamily. Zn(2+) is required as a cofactor.

The enzyme catalyses N-succinyl-L-glutamate + H2O = L-glutamate + succinate. It functions in the pathway amino-acid degradation; L-arginine degradation via AST pathway; L-glutamate and succinate from L-arginine: step 5/5. In terms of biological role, transforms N(2)-succinylglutamate into succinate and glutamate. This Paraburkholderia xenovorans (strain LB400) protein is Succinylglutamate desuccinylase.